The following is a 151-amino-acid chain: MKKIDVKILDPRVGKEFPLPTYATSGSAGLDLRACLDDAVELAPGDTTLVPTGLAIHIADPSLAAMMLPRSGLGHKHGIVLGNLVGLIDSDYQGQLMISVWNRGQDSFTIQPGERIAQIIFVPVVQAEFNLVEDFDATDRGEGGFGHSGRQ.

Residues 70 to 72, Asn83, 87 to 89, and Met97 contribute to the substrate site; these read RSG and LID.

This sequence belongs to the dUTPase family. In terms of assembly, homotrimer. Requires Mg(2+) as cofactor.

The enzyme catalyses dUTP + H2O = dUMP + diphosphate + H(+). It participates in pyrimidine metabolism; dUMP biosynthesis; dUMP from dCTP (dUTP route): step 2/2. Its function is as follows. This enzyme is involved in nucleotide metabolism: it produces dUMP, the immediate precursor of thymidine nucleotides and it decreases the intracellular concentration of dUTP so that uracil cannot be incorporated into DNA. The protein is Deoxyuridine 5'-triphosphate nucleotidohydrolase of Escherichia coli O7:K1 (strain IAI39 / ExPEC).